The primary structure comprises 373 residues: Dimethylallyltryptophan synthase CymD (373 aa).

L-tryptophan contacts are provided by Asp-55, Val-56, and Glu-64. Glu-64 functions as the Nucleophile in the catalytic mechanism. Residues Gln-77, Lys-146, Trp-148, Arg-205, and Lys-207 each contribute to the dimethylallyl diphosphate site. Arg-211 contributes to the L-tryptophan binding site. Tyr-274 serves as a coordination point for dimethylallyl diphosphate. Tyr-326 contributes to the L-tryptophan binding site. Residues Arg-337, Lys-339, and Tyr-341 each contribute to the dimethylallyl diphosphate site. In terms of domain architecture, FtsK spans 346 to 373 (MHDVTPPPLGVSQQHHLSGQTTARGRTE).

Functionally, dimethylallyltryptophan synthase; part of the gene cluster that mediates the biosynthesis of cyclic heptapeptides, known as cyclomarins and also of cyclic dipeptides, called cyclomarazines, which have both antimicrobial and cytotoxic effects. Catalyzes the reverse N-prenylation of monomeric L-tryptophan with dimethylallyl diphosphate (DMAPP) to form N-(1,1-dimethylallyl)-tryptophan (r-N-DMAT). The formation of r-N-DMAT appears to proceed via the deprotonation of the indole nitrogen of tryptophan, which facilitates a nucleophilic attack on the carbocation that is forming on the dimethylallyl group as the diphosphate dissociates. The N-(1,1-dimethylallyl)-tryptophan produced by CymD is combined with a range of standard and nonproteinogenic amino acid substrates to synthesize the peptides, a process that is probably catalyzed by the non-canonical nonribosomal peptide synthetase (NRPS), CymA. Other proteins in the cluster catalyze further modifications of the peptides including CymV which catalyzes the oxidation of olefinic cyclomarins and cyclomarazines to their respective epoxide derivatives. Utilizes only DMAPP as the prenyl donor and has no requirement for divalent cations. The protein is Dimethylallyltryptophan synthase CymD of Salinispora arenicola (strain CNS-205).